The primary structure comprises 992 residues: Disks large-associated protein 1 (992 aa).

Disordered regions lie at residues 150 to 209 and 355 to 376; these read TKSH…SWWS and KAMG…PKVA. Residue serine 169 is modified to Phosphoserine. The segment covering 194–209 has biased composition (low complexity); that stretch reads RSNASNASPTSPSWWS. Serine 362, serine 365, serine 368, serine 372, serine 389, serine 418, serine 421, serine 425, serine 428, serine 437, serine 509, serine 516, and serine 578 each carry phosphoserine. Residue threonine 579 is modified to Phosphothreonine. Serine 581 and serine 605 each carry phosphoserine. Phosphothreonine is present on threonine 606. 2 positions are modified to phosphoserine: serine 608 and serine 611. 2 interaction with DYL2 regions span residues 665–676 and 687–698; these read LSIGIQVDDAEE and NKFQSVGVQVEE. The tract at residues 914-980 is disordered; that stretch reads WKQMDPLDKK…QNSATESAES (67 aa). Basic and acidic residues-rich tracts occupy residues 918 to 927 and 943 to 958; these read DPLDKKERRA and IRER…EARK. A Phosphoserine modification is found at serine 947. A compositionally biased stretch (polar residues) spans 969-978; sequence VRQNSATESA. The PDZ-binding signature appears at 990-992; sequence TRL.

Belongs to the SAPAP family. In terms of assembly, interacts with the guanylate kinase-like domain of DLG1, DLG2, DLG3, DLG4 and AIP1. Interacts with the PDZ domain of SHANK1, SHANK2 and SHANK3. Found in a complex with DLG4 and SHANK1, SHANK2 or SHANK3. Found in a complex with DLG4 and BEGAIN. Interacts with DYL2 and LRFN1. Interacts with MPP2 (via the SH3-Guanylate kinase-like sub-module). Ubiquitinated by TRIM3; leading to proteasomal degradation. In terms of tissue distribution, highest levels in the neocortex, part of the hippocampus, the granule cell layer of the cerebellum, the glomerular layer of the olfactory bulb, the inner plexiform layer of the retina, the ventral and dorsal horn of the spinal cord, the neuromuscular junction and the submandibular ganglion.

It localises to the cell membrane. It is found in the postsynaptic density. Its subcellular location is the synapse. Part of the postsynaptic scaffold in neuronal cells. The protein is Disks large-associated protein 1 (Dlgap1) of Mus musculus (Mouse).